Here is a 193-residue protein sequence, read N- to C-terminus: CASP-like protein 1D1 (193 aa).

The interval Met1–Lys24 is disordered. The Cytoplasmic portion of the chain corresponds to Met1–Gln30. Residues Ser14–Lys24 show a composition bias toward polar residues. A helical membrane pass occupies residues Val31–Ser51. At Lys52–Ala76 the chain is on the extracellular side. The chain crosses the membrane as a helical span at residues Leu77 to Val97. The Cytoplasmic portion of the chain corresponds to Thr98 to Ser108. The chain crosses the membrane as a helical span at residues Ala109 to Ala129. At Thr130–His162 the chain is on the extracellular side. A helical membrane pass occupies residues Val163–Ile183. The Cytoplasmic portion of the chain corresponds to Ser184 to Arg193.

Belongs to the Casparian strip membrane proteins (CASP) family. In terms of assembly, homodimer and heterodimers.

It localises to the cell membrane. The polypeptide is CASP-like protein 1D1 (Arabidopsis thaliana (Mouse-ear cress)).